The sequence spans 467 residues: UDP-N-acetylmuramate--L-alanine ligase (467 aa).

114–120 (GTHGKTT) lines the ATP pocket.

This sequence belongs to the MurCDEF family.

It is found in the cytoplasm. It catalyses the reaction UDP-N-acetyl-alpha-D-muramate + L-alanine + ATP = UDP-N-acetyl-alpha-D-muramoyl-L-alanine + ADP + phosphate + H(+). It participates in cell wall biogenesis; peptidoglycan biosynthesis. Cell wall formation. In Rhodopseudomonas palustris (strain BisB18), this protein is UDP-N-acetylmuramate--L-alanine ligase.